Here is a 292-residue protein sequence, read N- to C-terminus: 4-hydroxy-tetrahydrodipicolinate synthase (292 aa).

Position 45 (Thr-45) interacts with pyruvate. Residue Tyr-133 is the Proton donor/acceptor of the active site. Catalysis depends on Lys-161, which acts as the Schiff-base intermediate with substrate. Pyruvate is bound at residue Ile-203.

This sequence belongs to the DapA family. Homodimer.

The protein resides in the cytoplasm. The catalysed reaction is L-aspartate 4-semialdehyde + pyruvate = (2S,4S)-4-hydroxy-2,3,4,5-tetrahydrodipicolinate + H2O + H(+). Its pathway is amino-acid biosynthesis; L-lysine biosynthesis via DAP pathway; (S)-tetrahydrodipicolinate from L-aspartate: step 3/4. Its function is as follows. Catalyzes the condensation of (S)-aspartate-beta-semialdehyde [(S)-ASA] and pyruvate to 4-hydroxy-tetrahydrodipicolinate (HTPA). The chain is 4-hydroxy-tetrahydrodipicolinate synthase from Pseudomonas aeruginosa (strain ATCC 15692 / DSM 22644 / CIP 104116 / JCM 14847 / LMG 12228 / 1C / PRS 101 / PAO1).